The chain runs to 727 residues: Platelet endothelial cell adhesion molecule (727 aa).

Positions 1–17 (MLLALGLTLVLYASLQA) are cleaved as a signal peptide. Residues 18-590 (EENSFTINSI…VRVFLAPWKK (573 aa)) are Extracellular-facing. Ig-like C2-type domains follow at residues 40–126 (GQQL…PKVT), 135–213 (GGVV…PIRS), 225–309 (PKFE…IMVN), 315–391 (PKPK…LVPI), 413–472 (GHAI…NCHS), and 488–578 (PVDE…RSST). A disulfide bond links Cys-47 and Cys-99. Residues Asn-74 and Asn-141 are each glycosylated (N-linked (GlcNAc...) asparagine). Disulfide bonds link Cys-142/Cys-195 and Cys-245/Cys-293. Residues Asn-309, Asn-345, Asn-360, Asn-424, and Asn-540 are each glycosylated (N-linked (GlcNAc...) asparagine). Intrachain disulfides connect Cys-336/Cys-375, Cys-420/Cys-465, and Cys-512/Cys-561. Residues 591–609 (GLIAVVVIGVVIATLIVAA) traverse the membrane as a helical segment. Over 610 to 727 (KCYFLRKAKA…SRTEGSLNGT (118 aa)) the chain is Cytoplasmic. A lipid anchor (S-palmitoyl cysteine) is attached at Cys-611. Residues 642-672 (SEPSVEANSHYGYDDVSGNDAVKPINQNKDP) are disordered. 2 consecutive short sequence motifs (ITIM motif) follow at residues 677–682 (VEYTEV) and 700–705 (TVYSEI). A phosphotyrosine; by FER mark is found at Tyr-679 and Tyr-702. Residues 698–718 (TETVYSEIRKVDPNLMENRYS) are membrane-bound segment which detaches upon phosphorylation. Residues 710–727 (PNLMENRYSRTEGSLNGT) are may play a role in cytoprotective signaling. Phosphoserine occurs at positions 718 and 723.

Trans-homodimer (via Ig-like C2-type 1 and Ig-like C2-type 2 domains); trans-homodimerization is required for cell-cell interaction. Forms a complex with BDKRB2 and GNAQ. Interacts with BDKRB2 and GNAQ. Interacts with PTPN11; Tyr-702 is critical for PTPN11 recruitment. Interacts with FER. Interacts with CD177; the interaction is Ca(2+)-dependent; the interaction is direct. Phosphorylated on Ser and Tyr residues by src kinases after cellular activation. Upon activation, phosphorylated on Ser-718 which probably initiates the dissociation of the membrane-interaction segment (residues 698-718) from the cell membrane allowing the sequential phosphorylation of Tyr-702 and Tyr-679. Constitutively phosphorylated on Ser-723 in resting platelets. Phosphorylated on tyrosine residues by FER and FES in response to FCER1 activation. In endothelial cells Fyn mediates mechanical-force (stretch or pull) induced tyrosine phosphorylation. In terms of processing, palmitoylation by ZDHHC21 is necessary for cell surface expression in endothelial cells and enrichment in membrane rafts. In terms of tissue distribution, expressed in lung and platelets (at protein level).

It is found in the cell membrane. It localises to the membrane raft. Its subcellular location is the cell junction. Functionally, cell adhesion molecule which is required for leukocyte transendothelial migration (TEM) under most inflammatory conditions. Tyr-679 plays a critical role in TEM and is required for efficient trafficking of PECAM1 to and from the lateral border recycling compartment (LBRC) and is also essential for the LBRC membrane to be targeted around migrating leukocytes. Trans-homophilic interaction may play a role in endothelial cell-cell adhesion via cell junctions. Heterophilic interaction with CD177 plays a role in transendothelial migration of neutrophils. Homophilic ligation of PECAM1 prevents macrophage-mediated phagocytosis of neighboring viable leukocytes by transmitting a detachment signal. Promotes macrophage-mediated phagocytosis of apoptotic leukocytes by tethering them to the phagocytic cells; PECAM1-mediated detachment signal appears to be disabled in apoptotic leukocytes. Modulates bradykinin receptor BDKRB2 activation. Regulates bradykinin- and hyperosmotic shock-induced ERK1/2 activation in endothelial cells. Induces susceptibility to atherosclerosis. This Mus musculus (Mouse) protein is Platelet endothelial cell adhesion molecule (Pecam1).